Reading from the N-terminus, the 224-residue chain is MKAVILLSGGLDSSTILYKAKADGCECHAISFDYQQRHRQELQSALTVAKKAAIAKHQVVNFDLRQWGGSALTDDAIDLPQQRSLDEMSQNIPVTYVPARNTIFLSFALGYAEAIAAERVYIGVNALDYSGYPDCRPDYIEAMQEVFRLGTKQGREGQPIKIVAPLINLKKTEIIQLGNELGVPWELTWSCYAGNDVACGVCDSCRLRLAAFAELGLVDPLVYA.

Residue 7-17 (LSGGLDSSTIL) participates in ATP binding. 4 residues coordinate Zn(2+): C191, C199, C202, and C205.

This sequence belongs to the QueC family. Requires Zn(2+) as cofactor.

It carries out the reaction 7-carboxy-7-deazaguanine + NH4(+) + ATP = 7-cyano-7-deazaguanine + ADP + phosphate + H2O + H(+). It participates in purine metabolism; 7-cyano-7-deazaguanine biosynthesis. In terms of biological role, catalyzes the ATP-dependent conversion of 7-carboxy-7-deazaguanine (CDG) to 7-cyano-7-deazaguanine (preQ(0)). The chain is 7-cyano-7-deazaguanine synthase from Nostoc punctiforme (strain ATCC 29133 / PCC 73102).